The chain runs to 689 residues: Polyribonucleotide nucleotidyltransferase (689 aa).

The Mg(2+) site is built by aspartate 482 and aspartate 488. One can recognise a KH domain in the interval 549–608; sequence PRMITLTIPQNKIGELIGPGGKNIRKIQEDNNVKIDIEETGRVFISGVESDGVKSAKEYV. The S1 motif domain maps to 618-686; it reads GKIYKSRVTK…KQGRINLSIK (69 aa).

It belongs to the polyribonucleotide nucleotidyltransferase family. The cofactor is Mg(2+).

Its subcellular location is the cytoplasm. It catalyses the reaction RNA(n+1) + phosphate = RNA(n) + a ribonucleoside 5'-diphosphate. Involved in mRNA degradation. Catalyzes the phosphorolysis of single-stranded polyribonucleotides processively in the 3'- to 5'-direction. This is Polyribonucleotide nucleotidyltransferase from Endomicrobium trichonymphae.